The following is a 112-amino-acid chain: T cell receptor alpha variable 41 (112 aa).

Positions 1-21 (MVKIRQFLLAILWLQLSCVSA) are cleaved as a signal peptide. Residues 24-112 (NEVEQSPQNL…DSAVYICAVR (89 aa)) form the Ig-like domain. 2 N-linked (GlcNAc...) asparagine glycosylation sites follow: Asn32 and Asn44. Cys45 and Cys109 form a disulfide bridge.

As to quaternary structure, alpha-beta TR is a heterodimer composed of an alpha and beta chain; disulfide-linked. The alpha-beta TR is associated with the transmembrane signaling CD3 coreceptor proteins to form the TR-CD3 (TcR or TCR). The assembly of alpha-beta TR heterodimers with CD3 occurs in the endoplasmic reticulum where a single alpha-beta TR heterodimer associates with one CD3D-CD3E heterodimer, one CD3G-CD3E heterodimer and one CD247 homodimer forming a stable octameric structure. CD3D-CD3E and CD3G-CD3E heterodimers preferentially associate with TR alpha and TR beta chains, respectively. The association of the CD247 homodimer is the last step of TcR assembly in the endoplasmic reticulum and is required for transport to the cell surface.

It is found in the cell membrane. V region of the variable domain of T cell receptor (TR) alpha chain that participates in the antigen recognition. Alpha-beta T cell receptors are antigen specific receptors which are essential to the immune response and are present on the cell surface of T lymphocytes. Recognize peptide-major histocompatibility (MH) (pMH) complexes that are displayed by antigen presenting cells (APC), a prerequisite for efficient T cell adaptive immunity against pathogens. Binding of alpha-beta TR to pMH complex initiates TR-CD3 clustering on the cell surface and intracellular activation of LCK that phosphorylates the ITAM motifs of CD3G, CD3D, CD3E and CD247 enabling the recruitment of ZAP70. In turn ZAP70 phosphorylates LAT, which recruits numerous signaling molecules to form the LAT signalosome. The LAT signalosome propagates signal branching to three major signaling pathways, the calcium, the mitogen-activated protein kinase (MAPK) kinase and the nuclear factor NF-kappa-B (NF-kB) pathways, leading to the mobilization of transcription factors that are critical for gene expression and essential for T cell growth and differentiation. The T cell repertoire is generated in the thymus, by V-(D)-J rearrangement. This repertoire is then shaped by intrathymic selection events to generate a peripheral T cell pool of self-MH restricted, non-autoaggressive T cells. Post-thymic interaction of alpha-beta TR with the pMH complexes shapes TR structural and functional avidity. The chain is T cell receptor alpha variable 41 from Homo sapiens (Human).